We begin with the raw amino-acid sequence, 72 residues long: ATP synthase subunit c (72 aa).

2 helical membrane passes run 4-24 and 46-66; these read ALGAGLAVSIAGIGGGIGMGI and LLFITLAFIETLTIYGLLIAF.

Belongs to the ATPase C chain family. F-type ATPases have 2 components, F(1) - the catalytic core - and F(0) - the membrane proton channel. F(1) has five subunits: alpha(3), beta(3), gamma(1), delta(1), epsilon(1). F(0) has three main subunits: a(1), b(2) and c(10-14). The alpha and beta chains form an alternating ring which encloses part of the gamma chain. F(1) is attached to F(0) by a central stalk formed by the gamma and epsilon chains, while a peripheral stalk is formed by the delta and b chains.

The protein localises to the cell membrane. F(1)F(0) ATP synthase produces ATP from ADP in the presence of a proton or sodium gradient. F-type ATPases consist of two structural domains, F(1) containing the extramembraneous catalytic core and F(0) containing the membrane proton channel, linked together by a central stalk and a peripheral stalk. During catalysis, ATP synthesis in the catalytic domain of F(1) is coupled via a rotary mechanism of the central stalk subunits to proton translocation. Functionally, key component of the F(0) channel; it plays a direct role in translocation across the membrane. A homomeric c-ring of between 10-14 subunits forms the central stalk rotor element with the F(1) delta and epsilon subunits. This Syntrophomonas wolfei subsp. wolfei (strain DSM 2245B / Goettingen) protein is ATP synthase subunit c.